The following is a 244-amino-acid chain: 14-3-3 protein beta/alpha-B (244 aa).

At methionine 1 the chain carries N-acetylmethionine.

It belongs to the 14-3-3 family. Homodimer, and heterodimer with other family members.

The protein resides in the cytoplasm. Adapter protein implicated in the regulation of a large spectrum of both general and specialized signaling pathways. Binds to a large number of partners, usually by recognition of a phosphoserine or phosphothreonine motif. Binding generally results in the modulation of the activity of the binding partner. The sequence is that of 14-3-3 protein beta/alpha-B (ywhab-b) from Xenopus laevis (African clawed frog).